Here is a 182-residue protein sequence, read N- to C-terminus: MFKKFEEKDSISSIQQLKSSVQKGIRAKLLEAYPKLESHIDLILPKKDSYRIAKCHDHIELLLNGAGDQVFFRHRDGPWMPTLRLLHKFPYFVTMQQVDKGAIRFVLSGANVMCPGLTSPGACMTPADKDTVVAIMAEGKEHALAVGLLTLSTQEILAKNKGIGIETYHFLNDGLWKSKPVK.

The region spanning 93–172 (VTMQQVDKGA…IGIETYHFLN (80 aa)) is the PUA domain.

Belongs to the MCTS1 family. In terms of assembly, interacts with DENR.

The protein resides in the cytoplasm. In terms of biological role, regulates translation as part of a complex with DENR. Specifically required for translational re-initiation in mRNAs containing upstream open reading frames (uORFs). Not required for standard translational initiation. Regulates expression of a subset of gene products including mbc, InR and EcR. This is Malignant T-cell-amplified sequence 1 homolog from Drosophila melanogaster (Fruit fly).